Reading from the N-terminus, the 352-residue chain is DNA integrity scanning protein DisA (352 aa).

In terms of domain architecture, DAC spans 3–143; sequence PQELIEKIKL…NYKYVVNQVD (141 aa). ATP contacts are provided by residues glycine 71, leucine 89, and 102–106; that span reads TRHRT.

The protein belongs to the DisA family. In terms of assembly, homooctamer. Mg(2+) is required as a cofactor.

It carries out the reaction 2 ATP = 3',3'-c-di-AMP + 2 diphosphate. Its function is as follows. Participates in a DNA-damage check-point. DisA forms globular foci that rapidly scan along the chromosomes searching for lesions. Functionally, also has diadenylate cyclase activity, catalyzing the condensation of 2 ATP molecules into cyclic di-AMP (c-di-AMP). c-di-AMP likely acts as a signaling molecule that may couple DNA integrity with a cellular process. This chain is DNA integrity scanning protein DisA, found in Thermotoga neapolitana (strain ATCC 49049 / DSM 4359 / NBRC 107923 / NS-E).